Reading from the N-terminus, the 586-residue chain is MSQATQDSVREDGVIASVSGPVVTARGLDARMNDVVYVGDEGLMGEVIEIEGDLTTIQVYEETSGVGPGEPVESTGEPLTVDLGPGMMDAIYDGVQRPLDVLESKMDSAFLDRGVDAPGIDLDEKWEFEPTVSEGDEVAPGDVVGTVPETVTIEHKVMVPPDFGGGEVVAVEEGEFSVTEAVVELDSGEEITMHQEWPVRQARPAAEKKTPREPLVSGQRILDGLFPIAKGGTAAIPGPFGSGKTVTQHQLAKWADADIVVYVGCGERGNEMTEVIEDFPELDDPKTGNPLMARTCLIANTSNMPVAARESCIYTGITIAEYYRDMGYDVALMADSTSRWAEAMREISSRLEEMPGEEGYPAYLAARLSEFYERAGYFTTVNGEEGSVSVIGAVSPPGGDFSEPVTQNTLRIVKTFWALDADLAERRHFPAINWNESYSLYQEQLDPWFVENVEDDWAEERQWAVDVLDEENELQEIVQLVGKDALPEDQQLTLEIARYLREAYLQQNAFHPTDTYCSPEKTYGILTAIHAFNDEAFKALEAGVPVEEIQAIEAAPRLNRIGVQEDWEAYIEDLKAEITEQLRELY.

238-245 (GPFGSGKT) contacts ATP.

This sequence belongs to the ATPase alpha/beta chains family. Has multiple subunits with at least A(3), B(3), C, D, E, F, H, I and proteolipid K(x).

It localises to the cell membrane. The catalysed reaction is ATP + H2O + 4 H(+)(in) = ADP + phosphate + 5 H(+)(out). Functionally, component of the A-type ATP synthase that produces ATP from ADP in the presence of a proton gradient across the membrane. The A chain is the catalytic subunit. The protein is A-type ATP synthase subunit A of Haloferax volcanii (strain ATCC 29605 / DSM 3757 / JCM 8879 / NBRC 14742 / NCIMB 2012 / VKM B-1768 / DS2) (Halobacterium volcanii).